A 313-amino-acid polypeptide reads, in one-letter code: WUSCHEL-related homeobox 5 (313 aa).

The interval 1–32 (METTTTTLGGGGGGRAGGFSDPPSPLSPPLSP) is disordered. The segment covering 8–17 (LGGGGGGRAG) has biased composition (gly residues). Positions 22–31 (PPSPLSPPLS) are enriched in pro residues. Positions 40–104 (LANARWTPTK…NHKARQRQKQ (65 aa)) form a DNA-binding region, homeobox; WUS-type. Disordered regions lie at residues 224-247 (AAGR…GRET) and 271-313 (CAAV…SGGR). Low complexity predominate over residues 271-301 (CAAVSPTTPSASASFSWESESSDSPSSEAPP).

This sequence belongs to the WUS homeobox family.

Its subcellular location is the nucleus. Transcription factor which may be involved in developmental processes. The sequence is that of WUSCHEL-related homeobox 5 (WOX5) from Oryza sativa subsp. japonica (Rice).